Consider the following 211-residue polypeptide: Arginine exporter protein ArgO (211 aa).

6 consecutive transmembrane segments (helical) span residues 1 to 21 (MISYYFQGFALGAAMILPLGP), 37 to 57 (LMIALLCALSDLVLISAGIFG), 68 to 88 (LLALVTWGGVAFLLWYGLGAL), 111 to 131 (IIATMLAVTWLNPHVYLDTFV), 147 to 167 (WFALGTISASFLWFFGLALLA), and 179 to 199 (AQRIINILVGVVMWLIAFQLA).

It belongs to the LysE/ArgO transporter (TC 2.A.75) family.

The protein resides in the cell inner membrane. It catalyses the reaction L-arginine(in) = L-arginine(out). Functionally, involved in the export of arginine. Important to control the intracellular level of arginine and the correct balance between arginine and lysine. The chain is Arginine exporter protein ArgO from Salmonella enteritidis PT4 (strain P125109).